The sequence spans 555 residues: uncharacterized protein (555 aa).

The first 28 residues, 1 to 28, serve as a signal peptide directing secretion; the sequence is MRSGLFGVLRWTAVGLVATLVASLALTA. Residue C29 is the site of N-palmitoyl cysteine attachment. C29 is lipidated: S-diacylglycerol cysteine.

This sequence to M.tuberculosis Rv2585c and M.bovis Mb2616c.

It localises to the cell membrane. This is an uncharacterized protein from Mycobacterium leprae (strain TN).